A 276-amino-acid chain; its full sequence is Putative serine/threonine-protein kinase R436 (276 aa).

The Protein kinase domain occupies 6-266 (YSLDKLIQNR…IKQKLNHFKT (261 aa)). ATP contacts are provided by residues 12-20 (IQNRKSKRI) and lysine 35. Aspartate 132 (proton acceptor) is an active-site residue.

The protein belongs to the protein kinase superfamily. Ser/Thr protein kinase family.

The enzyme catalyses L-seryl-[protein] + ATP = O-phospho-L-seryl-[protein] + ADP + H(+). It catalyses the reaction L-threonyl-[protein] + ATP = O-phospho-L-threonyl-[protein] + ADP + H(+). The chain is Putative serine/threonine-protein kinase R436 from Acanthamoeba polyphaga (Amoeba).